The primary structure comprises 190 residues: Potassium-transporting ATPase KdpC subunit (190 aa).

Residues 10–30 (VLFAVLTLICGVIYPYAITGI) traverse the membrane as a helical segment.

This sequence belongs to the KdpC family. In terms of assembly, the system is composed of three essential subunits: KdpA, KdpB and KdpC.

It localises to the cell inner membrane. In terms of biological role, part of the high-affinity ATP-driven potassium transport (or Kdp) system, which catalyzes the hydrolysis of ATP coupled with the electrogenic transport of potassium into the cytoplasm. This subunit acts as a catalytic chaperone that increases the ATP-binding affinity of the ATP-hydrolyzing subunit KdpB by the formation of a transient KdpB/KdpC/ATP ternary complex. This is Potassium-transporting ATPase KdpC subunit from Herminiimonas arsenicoxydans.